The chain runs to 341 residues: Putative gustatory receptor 9a (341 aa).

Residue Met1 is a topological domain, cytoplasmic. Residues 2–22 (SLWLEHFLTGYFQLCGLVCGW) traverse the membrane as a helical segment. The Extracellular portion of the chain corresponds to 23–30 (SGSRLGRL). The chain crosses the membrane as a helical span at residues 31 to 51 (LSSTFLVLILIELVGEIETYF). Residues 52–68 (TEENPDNESVPAYFAKV) lie on the Cytoplasmic side of the membrane. A helical transmembrane segment spans residues 69–89 (IMGVNMAYKMIHAWIALSALF). Residues 90–113 (ECRRFRYLLEELPPVKATSFIYRH) lie on the Extracellular side of the membrane. Residues 114 to 134 (LILEIILFACNAFLVLSEYTI) traverse the membrane as a helical segment. Residues 135–202 (RGIYLENLRY…LAKVTRSLSH (68 aa)) are Cytoplasmic-facing. Residues 203–223 (LFGLSLLLLNVLCLGDWIIVC) traverse the membrane as a helical segment. Residues 224-233 (NVYFMVAYLQ) are Extracellular-facing. A helical membrane pass occupies residues 234-254 (VLPATLFLFGQVMFVVCPTLI). Residues 255–318 (KIWSICAASH…GIYHLNLQTL (64 aa)) are Cytoplasmic-facing. Residues 319–339 (AGMFFFILEALVIFLQFVSLV) traverse the membrane as a helical segment. Residues 340 to 341 (RT) lie on the Extracellular side of the membrane.

This sequence belongs to the insect chemoreceptor superfamily. Gustatory receptor (GR) family. Gr2a subfamily. Expressed in neurons of the terminal external chemosensory organ of larvae.

It is found in the cell membrane. Its function is as follows. Probable gustatory receptor which mediates acceptance or avoidance behavior, depending on its substrates. This is Putative gustatory receptor 9a (Gr9a) from Drosophila melanogaster (Fruit fly).